A 523-amino-acid polypeptide reads, in one-letter code: MTHAGMKASLPNRVMLNAYPDSIDGDLAGTVRMLQRPEFTDAFGLFYVLPSIFNSDLDRGFSIIDYDLNSDLASAEDLAALDELGIMLKFDMVLNHLSVGSPQFQDLLKHGDDSAFRDFFIDWNEFWEGEGELHADGHVVPSPEHLDRLFMRKPGLPILQVRFPDGSDRFYWNTFYQRVETIDGERSYLGQMDLNAESPRVWTFYRETFEKLARYGAKIVRLDAFAYLHKAVGDTNFFNTPGTWDHLDRLRTISEENGLVLLPEIHGEYGTKIHEELSDRDYPVYDFFFPGLVIDAIDSASNTHLLRWIDEIIERDIATVNMLGCHDGIPVIDLKGGPTGQGLLPDATIEAMISRLLERGGRVKNLYGADGTKVSYYQVNATFFSALGESDARLRLARAIQLFVPGTPQVWYLDLFAGANDVEAADRAGADGHKEINRTNLSAADVEAGLARPIVLDQLEMIRLRNASPAFDGRFEVVPTDDTRLQLRWQNGSTVALLDADLATERFTITHEHDGHTEILGYD.

Sucrose 6(F)-phosphate is bound by residues D58, H96, 221-223, E264, 326-327, and K434; these read RLD and HD. D223 serves as the catalytic Nucleophile. E264 functions as the Proton donor/acceptor in the catalytic mechanism.

It belongs to the glycosyl hydrolase 13 family. Sucrose phosphorylase subfamily. Monomer.

The enzyme catalyses sucrose 6(F)-phosphate + phosphate = beta-D-fructose 6-phosphate + alpha-D-glucose 1-phosphate. In terms of biological role, catalyzes the reversible phosphorolysis of sucrose 6(F)-phosphate into alpha-D-glucose 1-phosphate (Glc1P) and D-fructose 6-phosphate. May be involved in a new pathway for the degradation of sucrose, which could become phosphorylated on its fructose moiety during uptake via a PTS system. Shows strict specificity since it does not catalyze reactions with alternative substrates. The polypeptide is Sucrose 6(F)-phosphate phosphorylase (Ilumatobacter coccineus (strain NBRC 103263 / KCTC 29153 / YM16-304)).